Consider the following 298-residue polypeptide: Probable tRNA(His) guanylyltransferase (298 aa).

Positions 58, 59, and 105 each coordinate Mg(2+). GTP contacts are provided by residues 58-63 and 104-105; these read DGRNFH and SD.

Belongs to the tRNA(His) guanylyltransferase family. Homotetramer. Interacts with MFN1 and MFN2; functions as a guanyl-nucleotide exchange factor/GEF for MFN2 and also probably MFN1. It depends on Mg(2+) as a cofactor. Expressed in many tissues.

It localises to the cytoplasm. The protein localises to the mitochondrion outer membrane. It carries out the reaction a 5'-end ribonucleotide-tRNA(His) + GTP + ATP + H2O = a 5'-end phospho-guanosine-ribonucleotide-tRNA(His) + AMP + 2 diphosphate + H(+). Adds a GMP to the 5'-end of tRNA(His) after transcription and RNase P cleavage. This step is essential for proper recognition of the tRNA and for the fidelity of protein synthesis. Also functions as a guanyl-nucleotide exchange factor/GEF for the MFN1 and MFN2 mitofusins thereby regulating mitochondrial fusion. By regulating both mitochondrial dynamics and bioenergetic function, it contributes to cell survival following oxidative stress. This is Probable tRNA(His) guanylyltransferase (THG1L) from Homo sapiens (Human).